The sequence spans 1385 residues: Formin-like protein 7 (1385 aa).

A Phosphatase tensin-type domain is found at 9–193 (FKKPPDGLLL…RYVSMRNVVP (185 aa)). Cysteine 126 serves as the catalytic Phosphocysteine intermediate. One can recognise a C2 tensin-type domain in the interval 199–358 (DRALTLDSVI…KASSTSQGNI (160 aa)). Disordered regions lie at residues 345 to 367 (IPQR…DGSE), 427 to 510 (APSR…LTVN), 649 to 989 (STAA…PLHW), and 1362 to 1385 (KRAQ…LLEP). 3 stretches are compositionally biased toward polar residues: residues 349–358 (KASSTSQGNI), 448–470 (TSAS…SPVQ), and 483–510 (PAQS…LTVN). 2 stretches are compositionally biased toward pro residues: residues 654–665 (PPLPPPLPPPLK) and 689–701 (TQPP…PPIQ). Residues 702 to 718 (PTLISNSIYSSTSSVVS) are compositionally biased toward low complexity. Composition is skewed to pro residues over residues 727–758 (PAPP…PPSA), 766–795 (PVPP…PPAA), and 802–815 (AVPP…PPMV). A compositionally biased stretch (low complexity) spans 855 to 867 (QTSSLVSSLPSSR). 2 stretches are compositionally biased toward pro residues: residues 895–906 (SAPPAPPLPPPK) and 921–932 (WPPPPPPGPPPK). Positions 933–942 (NSSNSLPSKG) are enriched in low complexity. One can recognise an FH2 domain in the interval 974–1372 (RPNQSSKRTP…RAQMEAEKEK (399 aa)).

Belongs to the formin-like family. Class-II subfamily.

This chain is Formin-like protein 7 (FH7), found in Oryza sativa subsp. japonica (Rice).